A 614-amino-acid chain; its full sequence is Aspartate--tRNA ligase (614 aa).

Residue E174 participates in L-aspartate binding. The interval Q198 to K201 is aspartate. Residue R220 participates in L-aspartate binding. ATP-binding positions include R220–E222 and Q229. H448 contacts L-aspartate. ATP is bound at residue E482. R489 is a binding site for L-aspartate. ATP is bound at residue G534 to R537.

This sequence belongs to the class-II aminoacyl-tRNA synthetase family. Type 1 subfamily. In terms of assembly, homodimer.

Its subcellular location is the cytoplasm. The catalysed reaction is tRNA(Asp) + L-aspartate + ATP = L-aspartyl-tRNA(Asp) + AMP + diphosphate. In terms of biological role, catalyzes the attachment of L-aspartate to tRNA(Asp) in a two-step reaction: L-aspartate is first activated by ATP to form Asp-AMP and then transferred to the acceptor end of tRNA(Asp). In Lactobacillus acidophilus (strain ATCC 700396 / NCK56 / N2 / NCFM), this protein is Aspartate--tRNA ligase.